The chain runs to 159 residues: 3-hydroxyacyl-[acyl-carrier-protein] dehydratase FabZ (159 aa).

His-58 is an active-site residue.

The protein belongs to the thioester dehydratase family. FabZ subfamily.

It is found in the cytoplasm. The enzyme catalyses a (3R)-hydroxyacyl-[ACP] = a (2E)-enoyl-[ACP] + H2O. Its function is as follows. Involved in unsaturated fatty acids biosynthesis. Catalyzes the dehydration of short chain beta-hydroxyacyl-ACPs and long chain saturated and unsaturated beta-hydroxyacyl-ACPs. The polypeptide is 3-hydroxyacyl-[acyl-carrier-protein] dehydratase FabZ (Helicobacter pylori (strain P12)).